The sequence spans 146 residues: Putative pre-16S rRNA nuclease (146 aa).

The protein belongs to the YqgF nuclease family.

It localises to the cytoplasm. Could be a nuclease involved in processing of the 5'-end of pre-16S rRNA. This Pseudomonas savastanoi pv. phaseolicola (strain 1448A / Race 6) (Pseudomonas syringae pv. phaseolicola (strain 1448A / Race 6)) protein is Putative pre-16S rRNA nuclease.